A 163-amino-acid polypeptide reads, in one-letter code: Troponin C (163 aa).

Ser-1 is subject to N-acetylserine. EF-hand domains lie at Glu-14–Ser-49, Ile-50–Asp-85, Ile-90–Asp-125, and Leu-127–Arg-162. An N6,N6-dimethyllysine; alternate modification is found at Lys-20. Lys-20 is modified (N6-methyllysine; alternate). 13 residues coordinate Ca(2+): Asp-27, Asp-29, Asp-33, Glu-38, Asp-63, Asp-65, Ser-67, Thr-69, Glu-74, Asp-103, Asn-105, Asp-107, and Glu-114.

This sequence belongs to the troponin C family.

Troponin is the central regulatory protein of striated muscle contraction. Tn consists of three components: Tn-I which is the inhibitor of actomyosin ATPase, Tn-T which contains the binding site for tropomyosin and Tn-C. The binding of calcium to Tn-C abolishes the inhibitory action of Tn on actin filaments. The sequence is that of Troponin C from Branchiostoma lanceolatum (Common lancelet).